A 494-amino-acid polypeptide reads, in one-letter code: Glutamate--tRNA ligase (494 aa).

The 'HIGH' region signature appears at 9–19 (PSPTGDPHVGT). The 'KMSKS' region motif lies at 250–254 (KLSKR). Lysine 253 serves as a coordination point for ATP.

It belongs to the class-I aminoacyl-tRNA synthetase family. Glutamate--tRNA ligase type 1 subfamily. Monomer.

It localises to the cytoplasm. It catalyses the reaction tRNA(Glu) + L-glutamate + ATP = L-glutamyl-tRNA(Glu) + AMP + diphosphate. Catalyzes the attachment of glutamate to tRNA(Glu) in a two-step reaction: glutamate is first activated by ATP to form Glu-AMP and then transferred to the acceptor end of tRNA(Glu). This is Glutamate--tRNA ligase from Alcanivorax borkumensis (strain ATCC 700651 / DSM 11573 / NCIMB 13689 / SK2).